The primary structure comprises 496 residues: Cytochrome P450 monooxygenase ausR (496 aa).

The chain crosses the membrane as a helical span at residues 12–32; it reads IGLYILWTIPVLFVIFKLLAP. C435 serves as a coordination point for heme.

Belongs to the cytochrome P450 family. Heme serves as cofactor.

It is found in the membrane. It functions in the pathway secondary metabolite biosynthesis; terpenoid biosynthesis. Functionally, cytochrome P450 monooxygenase; part of the gene cluster B that mediates the biosynthesis of the fungal meroterpenoid acetoxydehydroaustin. The first step of the pathway is the synthesis of 3,5-dimethylorsellinic acid by the polyketide synthase ausA. 3,5-dimethylorsellinic acid is then prenylated by the polyprenyl transferase ausN. Further epoxidation by the FAD-dependent monooxygenase ausM and cyclization by the probable terpene cyclase ausL lead to the formation of protoaustinoid A. Protoaustinoid A is then oxidized to spiro-lactone preaustinoid A3 by the combined action of the FAD-binding monooxygenases ausB and ausC, and the dioxygenase ausE. Acid-catalyzed keto-rearrangement and ring contraction of the tetraketide portion of preaustinoid A3 by ausJ lead to the formation of preaustinoid A4. The aldo-keto reductase ausK, with the help of ausH, is involved in the next step by transforming preaustinoid A4 into isoaustinone which is in turn hydroxylated by the P450 monooxygenase ausI to form austinolide. The cytochrome P450 monooxygenase ausG then modifies austinolide to austinol. Austinol is further acetylated to austin by the O-acetyltransferase ausP, which spontaneously changes to dehydroaustin. The cytochrome P450 monooxygenase then converts dehydroaustin is into 7-dehydrodehydroaustin. The hydroxylation catalyzed by ausR permits the second O-acetyltransferase ausQ to add an additional acetyl group to the molecule, leading to the formation of acetoxydehydroaustin. Due to genetic rearrangements of the clusters and the subsequent loss of some enzymes, the end product of the Penicillium brasilianum austinoid biosynthesis clusters is acetoxydehydroaustin. This chain is Cytochrome P450 monooxygenase ausR, found in Penicillium brasilianum.